We begin with the raw amino-acid sequence, 168 residues long: uncharacterized protein (168 aa).

Residues 14–168 (IDIPLLDAAS…EYKHWIYVTK (155 aa)) form the N-acetyltransferase domain.

Belongs to the acetyltransferase family.

This is an uncharacterized protein from Bacillus subtilis (strain 168).